The sequence spans 105 residues: Large ribosomal subunit protein uL24 (105 aa).

It belongs to the universal ribosomal protein uL24 family. In terms of assembly, part of the 50S ribosomal subunit.

In terms of biological role, one of two assembly initiator proteins, it binds directly to the 5'-end of the 23S rRNA, where it nucleates assembly of the 50S subunit. Its function is as follows. One of the proteins that surrounds the polypeptide exit tunnel on the outside of the subunit. This is Large ribosomal subunit protein uL24 from Clostridium kluyveri (strain ATCC 8527 / DSM 555 / NBRC 12016 / NCIMB 10680 / K1).